Consider the following 357-residue polypeptide: Peptide chain release factor 1 (357 aa).

Gln-235 carries the N5-methylglutamine modification. Basic and acidic residues predominate over residues 282-294; it reads RQKADTERSESRR. The interval 282 to 308 is disordered; that stretch reads RQKADTERSESRRSQVGSGDRSERIRT.

Belongs to the prokaryotic/mitochondrial release factor family. Methylated by PrmC. Methylation increases the termination efficiency of RF1.

It is found in the cytoplasm. Functionally, peptide chain release factor 1 directs the termination of translation in response to the peptide chain termination codons UAG and UAA. In Brucella anthropi (strain ATCC 49188 / DSM 6882 / CCUG 24695 / JCM 21032 / LMG 3331 / NBRC 15819 / NCTC 12168 / Alc 37) (Ochrobactrum anthropi), this protein is Peptide chain release factor 1.